The following is a 279-amino-acid chain: Diaminopimelate epimerase (279 aa).

Asn11 and Asn64 together coordinate substrate. Cys73 acts as the Proton donor in catalysis. Substrate is bound by residues 74-75 (GN), Asn170, and 187-188 (ER). Cys196 (proton acceptor) is an active-site residue. 197–198 (GS) contacts substrate. The tract at residues 255 to 279 (NTDHQRRRHSLSRSPSGRPRLQECR) is disordered.

It belongs to the diaminopimelate epimerase family. Homodimer.

The protein resides in the cytoplasm. The catalysed reaction is (2S,6S)-2,6-diaminopimelate = meso-2,6-diaminopimelate. It participates in amino-acid biosynthesis; L-lysine biosynthesis via DAP pathway; DL-2,6-diaminopimelate from LL-2,6-diaminopimelate: step 1/1. Functionally, catalyzes the stereoinversion of LL-2,6-diaminopimelate (L,L-DAP) to meso-diaminopimelate (meso-DAP), a precursor of L-lysine. The sequence is that of Diaminopimelate epimerase from Methanopyrus kandleri (strain AV19 / DSM 6324 / JCM 9639 / NBRC 100938).